Reading from the N-terminus, the 126-residue chain is MREEEAAAVVTVPQAGRDGEQPGPPAGLGCAAVRGEPGGGGPQESRKQWKKFLYCEPHKRIKEVLEEELYIKRDECHIKHPPAVALEGIWSIKRNLPVGGLKPGLQSRNSLLPQAKYYSRHGGLRR.

Residues 1 to 46 are disordered; the sequence is MREEEAAAVVTVPQAGRDGEQPGPPAGLGCAAVRGEPGGGGPQESR.

Its subcellular location is the cytoplasm. The protein resides in the cytoskeleton. It is found in the cilium basal body. This is an uncharacterized protein from Bos taurus (Bovine).